The following is an 89-amino-acid chain: Omega-theraphotoxin-Ba1c (89 aa).

A signal peptide spans 1 to 23 (MRSLTLAAVLACSLLLVFHTSAA). Positions 24-50 (EEHEAQEGYLMNPGDTDTALATVDDER) are excised as a propeptide. 3 disulfide bridges follow: Cys54-Cys75, Cys58-Cys81, and Cys67-Cys86.

The protein belongs to the neurotoxin 12 (Hwtx-2) family. 06 (TXP1) subfamily. As to expression, expressed by the venom gland.

Its subcellular location is the secreted. Inhibits voltage-gated calcium channels (Cav) in rat cerebellar granule cells. Has insecticidal activity. The chain is Omega-theraphotoxin-Ba1c from Brachypelma albiceps (Mexican golden redrump tarantula).